We begin with the raw amino-acid sequence, 124 residues long: Acidic phospholipase A2 (124 aa).

Cystine bridges form between cysteine 26–cysteine 116, cysteine 28–cysteine 44, cysteine 43–cysteine 95, cysteine 49–cysteine 124, cysteine 50–cysteine 88, cysteine 57–cysteine 81, and cysteine 75–cysteine 86. Ca(2+)-binding residues include tyrosine 27, glycine 29, and glycine 31. The active site involves histidine 47. Aspartate 48 provides a ligand contact to Ca(2+). The active site involves aspartate 89.

It belongs to the phospholipase A2 family. Group II subfamily. D49 sub-subfamily. Ca(2+) is required as a cofactor. As to expression, expressed by the venom gland.

It localises to the secreted. It carries out the reaction a 1,2-diacyl-sn-glycero-3-phosphocholine + H2O = a 1-acyl-sn-glycero-3-phosphocholine + a fatty acid + H(+). Snake venom phospholipase A2 (PLA2) that inhibits ADP-induced platelet aggregation. PLA2 catalyzes the calcium-dependent hydrolysis of the 2-acyl groups in 3-sn-phosphoglycerides. This chain is Acidic phospholipase A2, found in Gloydius ussuriensis (Ussuri mamushi).